Here is a 64-residue protein sequence, read N- to C-terminus: Large ribosomal subunit protein uL29 (64 aa).

Belongs to the universal ribosomal protein uL29 family.

This is Large ribosomal subunit protein uL29 from Paraburkholderia phytofirmans (strain DSM 17436 / LMG 22146 / PsJN) (Burkholderia phytofirmans).